The chain runs to 156 residues: MNINATLLGQTVAFIIFVWFCMKFVWPPLMNAIEERQKRIADGLADADRAVKDLELAQAKATDQLKDAKATANEIIEQANKRKAQIVDEAKAEADAERAKIIAQGQAEIEAERNRVKEDLRKQVATLAIAGAEKILERSIDEAAHSDIVNKLVAEL.

Residues 13–33 (AFIIFVWFCMKFVWPPLMNAI) form a helical membrane-spanning segment.

The protein belongs to the ATPase B chain family. As to quaternary structure, F-type ATPases have 2 components, F(1) - the catalytic core - and F(0) - the membrane proton channel. F(1) has five subunits: alpha(3), beta(3), gamma(1), delta(1), epsilon(1). F(0) has three main subunits: a(1), b(2) and c(10-14). The alpha and beta chains form an alternating ring which encloses part of the gamma chain. F(1) is attached to F(0) by a central stalk formed by the gamma and epsilon chains, while a peripheral stalk is formed by the delta and b chains.

The protein resides in the cell inner membrane. In terms of biological role, f(1)F(0) ATP synthase produces ATP from ADP in the presence of a proton or sodium gradient. F-type ATPases consist of two structural domains, F(1) containing the extramembraneous catalytic core and F(0) containing the membrane proton channel, linked together by a central stalk and a peripheral stalk. During catalysis, ATP synthesis in the catalytic domain of F(1) is coupled via a rotary mechanism of the central stalk subunits to proton translocation. Its function is as follows. Component of the F(0) channel, it forms part of the peripheral stalk, linking F(1) to F(0). This is ATP synthase subunit b from Shewanella woodyi (strain ATCC 51908 / MS32).